A 377-amino-acid polypeptide reads, in one-letter code: Flagellar P-ring protein (377 aa).

Positions 1 to 30 are cleaved as a signal peptide; it reads MLARFLSSLLKASVTALAVVVAFGFAANFA.

The protein belongs to the FlgI family. As to quaternary structure, the basal body constitutes a major portion of the flagellar organelle and consists of four rings (L,P,S, and M) mounted on a central rod.

It localises to the periplasm. The protein localises to the bacterial flagellum basal body. In terms of biological role, assembles around the rod to form the L-ring and probably protects the motor/basal body from shearing forces during rotation. In Cupriavidus pinatubonensis (strain JMP 134 / LMG 1197) (Cupriavidus necator (strain JMP 134)), this protein is Flagellar P-ring protein.